The sequence spans 207 residues: tRNA (pseudouridine(54)-N(1))-methyltransferase (207 aa).

Leu137 contacts S-adenosyl-L-methionine.

Belongs to the methyltransferase superfamily. TrmY family. Homodimer.

It is found in the cytoplasm. The enzyme catalyses pseudouridine(54) in tRNA + S-adenosyl-L-methionine = N(1)-methylpseudouridine(54) in tRNA + S-adenosyl-L-homocysteine + H(+). Functionally, specifically catalyzes the N1-methylation of pseudouridine at position 54 (Psi54) in tRNAs. This Halorubrum lacusprofundi (strain ATCC 49239 / DSM 5036 / JCM 8891 / ACAM 34) protein is tRNA (pseudouridine(54)-N(1))-methyltransferase.